A 133-amino-acid chain; its full sequence is Large ribosomal subunit protein bL20 (133 aa).

It belongs to the bacterial ribosomal protein bL20 family.

Its function is as follows. Binds directly to 23S ribosomal RNA and is necessary for the in vitro assembly process of the 50S ribosomal subunit. It is not involved in the protein synthesizing functions of that subunit. This chain is Large ribosomal subunit protein bL20, found in Rubrobacter xylanophilus (strain DSM 9941 / JCM 11954 / NBRC 16129 / PRD-1).